Here is a 92-residue protein sequence, read N- to C-terminus: Small nuclear ribonucleoprotein E (92 aa).

One can recognise a Sm domain in the interval 18–92 (INLIFRYLQN…NITLLQSVSN (75 aa)).

Belongs to the snRNP Sm proteins family. In terms of assembly, core component of the spliceosomal U1, U2, U4 and U5 small nuclear ribonucleoproteins (snRNPs), the building blocks of the spliceosome. Most spliceosomal snRNPs contain a common set of Sm proteins, SNRPB, SNRPD1, SNRPD2, SNRPD3, SNRPE, SNRPF and SNRPG that assemble in a heptameric protein ring on the Sm site of the small nuclear RNA to form the core snRNP. Component of the U1 snRNP. The U1 snRNP is composed of the U1 snRNA and the 7 core Sm proteins SNRPB, SNRPD1, SNRPD2, SNRPD3, SNRPE, SNRPF and SNRPG, and at least three U1 snRNP-specific proteins SNRNP70/U1-70K, SNRPA/U1-A and SNRPC/U1-C. Component of the U4/U6-U5 tri-snRNP complex composed of the U4, U6 and U5 snRNAs and at least PRPF3, PRPF4, PRPF6, PRPF8, PRPF31, SNRNP200, TXNL4A, SNRNP40, SNRPB, SNRPD1, SNRPD2, SNRPD3, SNRPE, SNRPF, SNRPG, DDX23, CD2BP2, PPIH, SNU13, EFTUD2, SART1 and USP39, plus LSM2, LSM3, LSM4, LSM5, LSM6, LSM7 and LSM8. Component of the U7 snRNP complex, or U7 Sm protein core complex, that is composed of the U7 snRNA and at least LSM10, LSM11, SNRPB, SNRPD3, SNRPE, SNRPF and SNRPG; the complex does not contain SNRPD1 and SNRPD2. Component of the minor spliceosome, which splices U12-type introns. Part of the SMN-Sm complex that contains SMN1, GEMIN2/SIP1, DDX20/GEMIN3, GEMIN4, GEMIN5, GEMIN6, GEMIN7, GEMIN8, STRAP/UNRIP and the Sm proteins SNRPB, SNRPD1, SNRPD2, SNRPD3, SNRPE, SNRPF and SNRPG; catalyzes core snRNPs assembly. Forms a 6S pICln-Sm complex composed of CLNS1A/pICln, SNRPD1, SNRPD2, SNRPE, SNRPF and SNRPG; ring-like structure where CLNS1A/pICln mimics additional Sm proteins and which is unable to assemble into the core snRNP. Interacts with SMN1; the interaction is direct. Interacts with GEMIN2 (via N-terminus); the interaction is direct. Interacts with SNRPF; the interaction is direct. Interacts with SNRPG; the interaction is direct.

It localises to the cytoplasm. It is found in the cytosol. Its subcellular location is the nucleus. In terms of biological role, plays a role in pre-mRNA splicing as a core component of the spliceosomal U1, U2, U4 and U5 small nuclear ribonucleoproteins (snRNPs), the building blocks of the spliceosome. Component of both the pre-catalytic spliceosome B complex and activated spliceosome C complexes. As a component of the minor spliceosome, involved in the splicing of U12-type introns in pre-mRNAs. As part of the U7 snRNP it is involved in histone 3'-end processing. In Sus scrofa (Pig), this protein is Small nuclear ribonucleoprotein E (SNRPE).